A 211-amino-acid polypeptide reads, in one-letter code: Probable endo-1,4-beta-xylanase 5 (211 aa).

The N-terminal stretch at 1-16 (MKVTAAFASLLLTAFA) is a signal peptide. The 192-residue stretch at 19-210 (APEPVLVSRS…GAGSASVTIS (192 aa)) folds into the GH11 domain. The Nucleophile role is filled by E106. The Proton donor role is filled by E197.

This sequence belongs to the glycosyl hydrolase 11 (cellulase G) family.

The protein resides in the secreted. The catalysed reaction is Endohydrolysis of (1-&gt;4)-beta-D-xylosidic linkages in xylans.. It functions in the pathway glycan degradation; xylan degradation. Its function is as follows. Endo-1,4-beta-xylanase involved in the hydrolysis of xylan, a major structural heterogeneous polysaccharide found in plant biomass representing the second most abundant polysaccharide in the biosphere, after cellulose. This Aspergillus niger (strain ATCC MYA-4892 / CBS 513.88 / FGSC A1513) protein is Probable endo-1,4-beta-xylanase 5 (XYN5).